The following is a 273-amino-acid chain: Pantothenate synthetase (273 aa).

27-34 (MGALHDGH) lines the ATP pocket. Catalysis depends on H34, which acts as the Proton donor. Q58 provides a ligand contact to (R)-pantoate. A beta-alanine-binding site is contributed by Q58. 144 to 147 (GKKD) contributes to the ATP binding site. Residue Q150 coordinates (R)-pantoate. ATP contacts are provided by residues V173 and 181–184 (LSSR).

Belongs to the pantothenate synthetase family. In terms of assembly, homodimer.

It localises to the cytoplasm. The enzyme catalyses (R)-pantoate + beta-alanine + ATP = (R)-pantothenate + AMP + diphosphate + H(+). It functions in the pathway cofactor biosynthesis; (R)-pantothenate biosynthesis; (R)-pantothenate from (R)-pantoate and beta-alanine: step 1/1. In terms of biological role, catalyzes the condensation of pantoate with beta-alanine in an ATP-dependent reaction via a pantoyl-adenylate intermediate. This chain is Pantothenate synthetase, found in Campylobacter curvus (strain 525.92).